Reading from the N-terminus, the 184-residue chain is Spiro-conjugate synthase (184 aa).

The cysteines at positions 57 and 184 are disulfide-linked. Glutamine 115 contributes to the (1S,3R,6R,8R,9R,11R,14S,15S,19R,20R)-8-ethyl-9,15-dihydroxy-3,4,6,20-tetramethyl-21,23-dioxo-24-azapentacyclo[20.2.1.0(1,6).0(11,20).0(14,19)]pentacosa-4,12,22(25)-trien-25-olate binding site.

In terms of assembly, homodimer.

It catalyses the reaction 4-[(1R,2R,4aS,5S,8aR)-2-[(2R,3R,5E,7E)-3-ethyl-2-hydroxy-5,7-dimethylnona-5,7-dien-1-yl]-5-hydroxy-1-methyl-1,2,4a,5,6,7,8,8a-octahydronaphthalene-1-carbonyl]-2-methylidene-5-oxo-2,5-dihydro-1H-pyrrol-3-olate = (1S,3R,6R,8R,9R,11R,14S,15S,19R,20R)-8-ethyl-9,15-dihydroxy-3,4,6,20-tetramethyl-21,23-dioxo-24-azapentacyclo[20.2.1.0(1,6).0(11,20).0(14,19)]pentacosa-4,12,22(25)-trien-25-olate. Its pathway is antibiotic biosynthesis. In terms of biological role, involved in the biosynthesis of the spirotetramate antibiotics pyrroindomycins. Catalyzes the intramolecular cyclization forming the spiro-conjugate moiety in pyrroindomycins, via an exo-selective [4+2] cycloaddition reaction. This is Spiro-conjugate synthase from Streptomyces rugosporus.